The chain runs to 1390 residues: DNA-directed RNA polymerase subunit beta (1390 aa).

The protein belongs to the RNA polymerase beta chain family. As to quaternary structure, the RNAP catalytic core consists of 2 alpha, 1 beta, 1 beta' and 1 omega subunit. When a sigma factor is associated with the core the holoenzyme is formed, which can initiate transcription.

It carries out the reaction RNA(n) + a ribonucleoside 5'-triphosphate = RNA(n+1) + diphosphate. Its function is as follows. DNA-dependent RNA polymerase catalyzes the transcription of DNA into RNA using the four ribonucleoside triphosphates as substrates. This is DNA-directed RNA polymerase subunit beta from Gluconobacter oxydans (strain 621H) (Gluconobacter suboxydans).